The sequence spans 554 residues: DDB1- and CUL4-associated factor 11 homolog (554 aa).

The segment at 24 to 52 is disordered; it reads QRMKNRNDSDTDFSDDDEETSGGCPKMTP. Residues 33-43 are compositionally biased toward acidic residues; that stretch reads DTDFSDDDEET. WD repeat units follow at residues 245–284, 288–328, 336–375, 414–458, and 461–500; these read QNQCAVFCVRFSDDSEQIVCGTSEYSIHVFDVEQRRRIRT, AHED…DGDV, GHRDGVTYVDSRQDERYLLSNSKDQTIKVWDLRKFSCQGG, GHSV…VSRR, and GHQAVVRECDWHPQENEIVSTSWDGVTTVWTWDERAEGVI. The segment at 527-554 is disordered; that stretch reads PQRKLRKPISARNAKCPTTSSEPDDFQI.

This sequence belongs to the WD repeat LEC14B family.

Functionally, involved in regulation of lifespan. Required for dopaminergic CEP neuron degeneration in response to Mn(2+). The protein is DDB1- and CUL4-associated factor 11 homolog (wdr-23) of Caenorhabditis briggsae.